The chain runs to 322 residues: Cytochrome f (322 aa).

The signal sequence occupies residues 1–37; sequence MQNRKTYAYDWIKKWMIKSISTLIIINTMVWSSVSEA. Tyrosine 38, cysteine 58, cysteine 61, and histidine 62 together coordinate heme. The chain crosses the membrane as a helical span at residues 285–307; sequence VLRVQGLLLFFASVILAQIFLVL.

This sequence belongs to the cytochrome f family. In terms of assembly, the 4 large subunits of the cytochrome b6-f complex are cytochrome b6, subunit IV (17 kDa polypeptide, petD), cytochrome f and the Rieske protein, while the 4 small subunits are PetG, PetL, PetM and PetN. The complex functions as a dimer. Heme is required as a cofactor.

Its subcellular location is the plastid. It localises to the chloroplast thylakoid membrane. Functionally, component of the cytochrome b6-f complex, which mediates electron transfer between photosystem II (PSII) and photosystem I (PSI), cyclic electron flow around PSI, and state transitions. In Anthoceros angustus (Hornwort), this protein is Cytochrome f (petA).